A 427-amino-acid chain; its full sequence is Glutamate-1-semialdehyde 2,1-aminomutase (427 aa).

K265 carries the post-translational modification N6-(pyridoxal phosphate)lysine.

The protein belongs to the class-III pyridoxal-phosphate-dependent aminotransferase family. HemL subfamily. In terms of assembly, homodimer. Requires pyridoxal 5'-phosphate as cofactor.

The protein localises to the cytoplasm. It catalyses the reaction (S)-4-amino-5-oxopentanoate = 5-aminolevulinate. The protein operates within porphyrin-containing compound metabolism; protoporphyrin-IX biosynthesis; 5-aminolevulinate from L-glutamyl-tRNA(Glu): step 2/2. The sequence is that of Glutamate-1-semialdehyde 2,1-aminomutase from Pseudomonas aeruginosa (strain UCBPP-PA14).